Consider the following 461-residue polypeptide: Toxin CfTX-B (461 aa).

The first 24 residues, 1–24, serve as a signal peptide directing secretion; that stretch reads MDPRISSRLRALALLVFVISITDG. The propeptide occupies 25–31; sequence IPNRAKR.

The protein belongs to the jellyfish toxin family. Type II subfamily. Oligomer. In terms of processing, contains 2 disulfide bonds. Nematocytes.

It localises to the secreted. It is found in the nematocyst. The protein localises to the target cell membrane. The fraction containing this toxin and CfTX-B shows potent hemolytic activity. This fraction causes minor effects on the cardiovascular system of anesthetized rats (at 25 ug/kg), since it has no significant effects on heart rate but produces relatively small increases in mean arterial pressure. This is Toxin CfTX-B from Chironex fleckeri (Australian box jellyfish).